We begin with the raw amino-acid sequence, 289 residues long: Cell division protein ZipA (289 aa).

A topological domain (periplasmic) is located at residue methionine 1. A helical membrane pass occupies residues 2-22; that stretch reads DIGLREWLIVIGLIVIAGILF. Residues 23 to 289 are Cytoplasmic-facing; sequence DGWRRMRGGK…HERRSLMQKR (267 aa). The disordered stretch occupies residues 66 to 141; sequence REPSFDEQDL…KEREKAPAVA (76 aa). Residues 81–99 are compositionally biased toward basic and acidic residues; it reads REAKERKGGKRQEEPRQGD. A compositionally biased stretch (acidic residues) spans 100-114; the sequence is LDLDEGLALEADPSD.

The protein belongs to the ZipA family. As to quaternary structure, interacts with FtsZ via their C-terminal domains.

Its subcellular location is the cell inner membrane. In terms of biological role, essential cell division protein that stabilizes the FtsZ protofilaments by cross-linking them and that serves as a cytoplasmic membrane anchor for the Z ring. Also required for the recruitment to the septal ring of downstream cell division proteins. The protein is Cell division protein ZipA of Pseudomonas aeruginosa (strain LESB58).